Here is a 359-residue protein sequence, read N- to C-terminus: Molybdenum import ATP-binding protein ModC (359 aa).

Residues 1-236 (MNTEIKARFR…IDLPAAFADD (236 aa)) form the ABC transporter domain. Position 34–41 (34–41 (GHSGSGKT)) interacts with ATP. The Mop domain maps to 294–359 (QSSILNCVSA…AQIKAVALLA (66 aa)).

It belongs to the ABC transporter superfamily. Molybdate importer (TC 3.A.1.8) family. The complex is composed of two ATP-binding proteins (ModC), two transmembrane proteins (ModB) and a solute-binding protein (ModA).

The protein resides in the cell inner membrane. It catalyses the reaction molybdate(out) + ATP + H2O = molybdate(in) + ADP + phosphate + H(+). Its function is as follows. Part of the ABC transporter complex ModABC involved in molybdenum import. Responsible for energy coupling to the transport system. The polypeptide is Molybdenum import ATP-binding protein ModC (Dechloromonas aromatica (strain RCB)).